The following is a 165-amino-acid chain: SsrA-binding protein (165 aa).

Residues 141–165 (KLHDKRQDEKRKQADREVKSALARY) form a disordered region. Residues 145 to 159 (KRQDEKRKQADREVK) are compositionally biased toward basic and acidic residues.

The protein belongs to the SmpB family.

It localises to the cytoplasm. Its function is as follows. Required for rescue of stalled ribosomes mediated by trans-translation. Binds to transfer-messenger RNA (tmRNA), required for stable association of tmRNA with ribosomes. tmRNA and SmpB together mimic tRNA shape, replacing the anticodon stem-loop with SmpB. tmRNA is encoded by the ssrA gene; the 2 termini fold to resemble tRNA(Ala) and it encodes a 'tag peptide', a short internal open reading frame. During trans-translation Ala-aminoacylated tmRNA acts like a tRNA, entering the A-site of stalled ribosomes, displacing the stalled mRNA. The ribosome then switches to translate the ORF on the tmRNA; the nascent peptide is terminated with the 'tag peptide' encoded by the tmRNA and targeted for degradation. The ribosome is freed to recommence translation, which seems to be the essential function of trans-translation. In Prochlorococcus marinus (strain MIT 9313), this protein is SsrA-binding protein.